The following is a 206-amino-acid chain: Thiamine-phosphate synthase (206 aa).

Residues 38 to 42 (QLRAK) and Asn70 contribute to the 4-amino-2-methyl-5-(diphosphooxymethyl)pyrimidine site. 2 residues coordinate Mg(2+): Asp71 and Asp90. Residue Ser107 participates in 4-amino-2-methyl-5-(diphosphooxymethyl)pyrimidine binding. 2-[(2R,5Z)-2-carboxy-4-methylthiazol-5(2H)-ylidene]ethyl phosphate is bound at residue 133-135 (TTT). Lys136 contributes to the 4-amino-2-methyl-5-(diphosphooxymethyl)pyrimidine binding site. Residues Gly164 and 184–185 (VS) contribute to the 2-[(2R,5Z)-2-carboxy-4-methylthiazol-5(2H)-ylidene]ethyl phosphate site.

It belongs to the thiamine-phosphate synthase family. Mg(2+) serves as cofactor.

The catalysed reaction is 2-[(2R,5Z)-2-carboxy-4-methylthiazol-5(2H)-ylidene]ethyl phosphate + 4-amino-2-methyl-5-(diphosphooxymethyl)pyrimidine + 2 H(+) = thiamine phosphate + CO2 + diphosphate. It carries out the reaction 2-(2-carboxy-4-methylthiazol-5-yl)ethyl phosphate + 4-amino-2-methyl-5-(diphosphooxymethyl)pyrimidine + 2 H(+) = thiamine phosphate + CO2 + diphosphate. It catalyses the reaction 4-methyl-5-(2-phosphooxyethyl)-thiazole + 4-amino-2-methyl-5-(diphosphooxymethyl)pyrimidine + H(+) = thiamine phosphate + diphosphate. It functions in the pathway cofactor biosynthesis; thiamine diphosphate biosynthesis; thiamine phosphate from 4-amino-2-methyl-5-diphosphomethylpyrimidine and 4-methyl-5-(2-phosphoethyl)-thiazole: step 1/1. Condenses 4-methyl-5-(beta-hydroxyethyl)thiazole monophosphate (THZ-P) and 2-methyl-4-amino-5-hydroxymethyl pyrimidine pyrophosphate (HMP-PP) to form thiamine monophosphate (TMP). In Herpetosiphon aurantiacus (strain ATCC 23779 / DSM 785 / 114-95), this protein is Thiamine-phosphate synthase.